We begin with the raw amino-acid sequence, 345 residues long: Platelet-derived growth factor C (345 aa).

Positions 1 to 22 (MLLFGFLLLTFALVSQRQGAEA) are cleaved as a signal peptide. N-linked (GlcNAc...) asparagine glycosylation is found at N25 and N55. The CUB domain occupies 46-163 (HEKIITVSAN…PGFCIHYTLL (118 aa)). 4 disulfide bridges follow: C104-C124, C250-C294, C280-C335, and C287-C337.

The protein belongs to the PDGF/VEGF growth factor family. In terms of assembly, homodimer; disulfide-linked. Interacts with PDGFRA homodimers, and with heterodimers formed by PDGFRA and PDGFRB. Proteolytic removal of the N-terminal CUB domain releasing the core domain is necessary for unmasking the receptor-binding epitopes of the core domain. Cleavage after basic residues in the hinge region (region connecting the CUB and growth factor domains) gives rise to the receptor-binding form.

The protein localises to the secreted. Functionally, growth factor that plays an essential role in the regulation of embryonic development, cell proliferation, cell migration, survival and chemotaxis. Potent mitogen and chemoattractant for cells of mesenchymal origin. Required for normal skeleton formation during embryonic development. Required for normal skin morphogenesis during embryonic development. Plays an important role in wound healing, in angiogenesis and blood vessel development. The sequence is that of Platelet-derived growth factor C (PDGFC) from Gekko japonicus (Schlegel's Japanese gecko).